We begin with the raw amino-acid sequence, 202 residues long: Peptide methionine sulfoxide reductase B2, chloroplastic (202 aa).

The transit peptide at 1–63 (MAFNIITPGR…RRGFHGGRIV (63 aa)) directs the protein to the chloroplast. The MsrB domain maps to 77 to 198 (EEEWRAILSP…NSISLKFTPE (122 aa)). Positions 116, 119, 162, and 165 each coordinate Zn(2+). A disulfide bond links Cys-134 and Cys-187. The active-site Nucleophile is Cys-187.

It belongs to the MsrB Met sulfoxide reductase family. Zn(2+) serves as cofactor. Expressed in stems, young leaves, floral buds and flowers. Expressed at low levels in roots, mature leaves and siliques (at protein level).

Its subcellular location is the plastid. It is found in the chloroplast. It catalyses the reaction L-methionyl-[protein] + [thioredoxin]-disulfide + H2O = L-methionyl-(R)-S-oxide-[protein] + [thioredoxin]-dithiol. Catalyzes the reduction of methionine sulfoxide (MetSO) to methionine in proteins. Specifically reduces the MetSO R-enantiomer. Plays a protective role against oxidative stress by restoring activity to proteins that have been inactivated by methionine oxidation. May play an essential function in association with MSRB1 in maintaining vegetative growth during environmental constraints, through the preservation of photosynthetic antennae. MSRB1 and MSRB2 account for most of the leaf peptide MSR capacity. The chain is Peptide methionine sulfoxide reductase B2, chloroplastic from Arabidopsis thaliana (Mouse-ear cress).